Consider the following 392-residue polypeptide: NAD(P)H-quinone oxidoreductase subunit H, chloroplastic (392 aa).

The protein belongs to the complex I 49 kDa subunit family. NDH is composed of at least 16 different subunits, 5 of which are encoded in the nucleus.

It localises to the plastid. The protein localises to the chloroplast thylakoid membrane. The catalysed reaction is a plastoquinone + NADH + (n+1) H(+)(in) = a plastoquinol + NAD(+) + n H(+)(out). The enzyme catalyses a plastoquinone + NADPH + (n+1) H(+)(in) = a plastoquinol + NADP(+) + n H(+)(out). Its function is as follows. NDH shuttles electrons from NAD(P)H:plastoquinone, via FMN and iron-sulfur (Fe-S) centers, to quinones in the photosynthetic chain and possibly in a chloroplast respiratory chain. The immediate electron acceptor for the enzyme in this species is believed to be plastoquinone. Couples the redox reaction to proton translocation, and thus conserves the redox energy in a proton gradient. The polypeptide is NAD(P)H-quinone oxidoreductase subunit H, chloroplastic (Marchantia polymorpha (Common liverwort)).